A 239-amino-acid chain; its full sequence is Venom nerve growth factor (239 aa).

An N-terminal signal peptide occupies residues 1–18 (MSMLCYTLIIAFLIGIWA). Residues 19–125 (APKSEDNVPL…ALNRNIQAKR (107 aa)) constitute a propeptide that is removed on maturation. Residues 47–66 (GLKTSRNTDQRHPAPKKADD) show a composition bias toward basic and acidic residues. Residues 47–68 (GLKTSRNTDQRHPAPKKADDQE) are disordered. Intrachain disulfides connect C139-C203, C181-C231, and C191-C233.

Belongs to the NGF-beta family. As to quaternary structure, homodimer; non-covalently linked. Expressed by the venom gland.

Its subcellular location is the secreted. In terms of biological role, nerve growth factor is important for the development and maintenance of the sympathetic and sensory nervous systems. It stimulates division and differentiation of sympathetic and embryonic sensory neurons as well as basal forebrain cholinergic neurons in the brain. Its relevance in the snake venom is not clear. However, it has been shown to inhibit metalloproteinase-dependent proteolysis of platelet glycoprotein Ib alpha, suggesting a metalloproteinase inhibition to prevent metalloprotease autodigestion and/or protection against prey proteases. Binds a lipid between the two protein chains in the homodimer. The lipid-bound form promotes histamine relase from mouse mast cells, contrary to the lipid-free form. In Pseudechis porphyriacus (Red-bellied black snake), this protein is Venom nerve growth factor.